The chain runs to 421 residues: UDP-N-acetylglucosamine 1-carboxyvinyltransferase (421 aa).

Phosphoenolpyruvate is bound at residue K22 to N23. R91 is a binding site for UDP-N-acetyl-alpha-D-glucosamine. Residue C115 is the Proton donor of the active site. The residue at position 115 (C115) is a 2-(S-cysteinyl)pyruvic acid O-phosphothioketal. UDP-N-acetyl-alpha-D-glucosamine contacts are provided by residues R120–L124, D306, and I328.

Belongs to the EPSP synthase family. MurA subfamily.

Its subcellular location is the cytoplasm. The enzyme catalyses phosphoenolpyruvate + UDP-N-acetyl-alpha-D-glucosamine = UDP-N-acetyl-3-O-(1-carboxyvinyl)-alpha-D-glucosamine + phosphate. It functions in the pathway cell wall biogenesis; peptidoglycan biosynthesis. Functionally, cell wall formation. Adds enolpyruvyl to UDP-N-acetylglucosamine. In Methylacidiphilum infernorum (isolate V4) (Methylokorus infernorum (strain V4)), this protein is UDP-N-acetylglucosamine 1-carboxyvinyltransferase.